Consider the following 502-residue polypeptide: ATP synthase subunit alpha (502 aa).

Gly-169 to Thr-176 provides a ligand contact to ATP.

Belongs to the ATPase alpha/beta chains family. In terms of assembly, F-type ATPases have 2 components, CF(1) - the catalytic core - and CF(0) - the membrane proton channel. CF(1) has five subunits: alpha(3), beta(3), gamma(1), delta(1), epsilon(1). CF(0) has three main subunits: a(1), b(2) and c(9-12). The alpha and beta chains form an alternating ring which encloses part of the gamma chain. CF(1) is attached to CF(0) by a central stalk formed by the gamma and epsilon chains, while a peripheral stalk is formed by the delta and b chains.

Its subcellular location is the cell membrane. It carries out the reaction ATP + H2O + 4 H(+)(in) = ADP + phosphate + 5 H(+)(out). Functionally, produces ATP from ADP in the presence of a proton gradient across the membrane. The alpha chain is a regulatory subunit. This Priestia megaterium (strain ATCC 12872 / QMB1551) (Bacillus megaterium) protein is ATP synthase subunit alpha.